Reading from the N-terminus, the 129-residue chain is Large ribosomal subunit protein bL12 (129 aa).

Belongs to the bacterial ribosomal protein bL12 family. In terms of assembly, homodimer. Part of the ribosomal stalk of the 50S ribosomal subunit. Forms a multimeric L10(L12)X complex, where L10 forms an elongated spine to which 2 to 4 L12 dimers bind in a sequential fashion. Binds GTP-bound translation factors.

In terms of biological role, forms part of the ribosomal stalk which helps the ribosome interact with GTP-bound translation factors. Is thus essential for accurate translation. In Fervidobacterium nodosum (strain ATCC 35602 / DSM 5306 / Rt17-B1), this protein is Large ribosomal subunit protein bL12.